We begin with the raw amino-acid sequence, 569 residues long: Adenine deaminase 1 (569 aa).

The protein belongs to the metallo-dependent hydrolases superfamily. Adenine deaminase family. Mn(2+) is required as a cofactor.

It catalyses the reaction adenine + H2O + H(+) = hypoxanthine + NH4(+). The sequence is that of Adenine deaminase 1 from Rhizobium johnstonii (strain DSM 114642 / LMG 32736 / 3841) (Rhizobium leguminosarum bv. viciae).